We begin with the raw amino-acid sequence, 503 residues long: Lysine--tRNA ligase (503 aa).

Mg(2+) contacts are provided by glutamate 412 and glutamate 419.

It belongs to the class-II aminoacyl-tRNA synthetase family. Homodimer. It depends on Mg(2+) as a cofactor.

The protein localises to the cytoplasm. The catalysed reaction is tRNA(Lys) + L-lysine + ATP = L-lysyl-tRNA(Lys) + AMP + diphosphate. The polypeptide is Lysine--tRNA ligase (Buchnera aphidicola subsp. Schizaphis graminum (strain Sg)).